The chain runs to 508 residues: Photosystem II CP47 reaction center protein (508 aa).

A run of 6 helical transmembrane segments spans residues 21-36, 101-115, 140-156, 203-218, 237-252, and 457-472; these read SVHI…WAGS, IVFS…IWHW, GIHL…FGAF, IAAG…FHLS, VLSS…AFVV, and TFAL…HGAR.

This sequence belongs to the PsbB/PsbC family. PsbB subfamily. In terms of assembly, PSII is composed of 1 copy each of membrane proteins PsbA, PsbB, PsbC, PsbD, PsbE, PsbF, PsbH, PsbI, PsbJ, PsbK, PsbL, PsbM, PsbT, PsbX, PsbY, PsbZ, Psb30/Ycf12, at least 3 peripheral proteins of the oxygen-evolving complex and a large number of cofactors. It forms dimeric complexes. It depends on Binds multiple chlorophylls. PSII binds additional chlorophylls, carotenoids and specific lipids. as a cofactor.

It is found in the plastid. The protein localises to the chloroplast thylakoid membrane. One of the components of the core complex of photosystem II (PSII). It binds chlorophyll and helps catalyze the primary light-induced photochemical processes of PSII. PSII is a light-driven water:plastoquinone oxidoreductase, using light energy to abstract electrons from H(2)O, generating O(2) and a proton gradient subsequently used for ATP formation. This Calycanthus floridus var. glaucus (Eastern sweetshrub) protein is Photosystem II CP47 reaction center protein.